The following is a 307-amino-acid chain: Acetyl-coenzyme A carboxylase carboxyl transferase subunit beta (307 aa).

Positions 28 to 297 (LWVKCPDTGQ…TPQPGTAPEP (270 aa)) constitute a CoA carboxyltransferase N-terminal domain. The interval 286–307 (RRTPQPGTAPEPTTPEPLPNAA) is disordered. Over residues 292 to 307 (GTAPEPTTPEPLPNAA) the composition is skewed to pro residues.

This sequence belongs to the AccD/PCCB family. Acetyl-CoA carboxylase is a heterohexamer composed of biotin carboxyl carrier protein (AccB), biotin carboxylase (AccC) and two subunits each of ACCase subunit alpha (AccA) and ACCase subunit beta (AccD).

Its subcellular location is the cytoplasm. The enzyme catalyses N(6)-carboxybiotinyl-L-lysyl-[protein] + acetyl-CoA = N(6)-biotinyl-L-lysyl-[protein] + malonyl-CoA. The protein operates within lipid metabolism; malonyl-CoA biosynthesis; malonyl-CoA from acetyl-CoA: step 1/1. Functionally, component of the acetyl coenzyme A carboxylase (ACC) complex. Biotin carboxylase (BC) catalyzes the carboxylation of biotin on its carrier protein (BCCP) and then the CO(2) group is transferred by the transcarboxylase to acetyl-CoA to form malonyl-CoA. In Methylorubrum extorquens (strain CM4 / NCIMB 13688) (Methylobacterium extorquens), this protein is Acetyl-coenzyme A carboxylase carboxyl transferase subunit beta.